Here is an 81-residue protein sequence, read N- to C-terminus: Short neurotoxin 1 (81 aa).

The N-terminal stretch at 1-21 (MKTLLLTLVVVTIVFLDLGYT) is a signal peptide. Disulfide bonds link C24–C43, C38–C60, C62–C73, and C74–C79.

The protein belongs to the three-finger toxin family. Short-chain subfamily. Type I alpha-neurotoxin sub-subfamily. In terms of tissue distribution, expressed by the venom gland.

The protein resides in the secreted. In terms of biological role, binds to muscle nicotinic acetylcholine receptor (nAChR) and inhibit acetylcholine from binding to the receptor, thereby impairing neuromuscular transmission. This is Short neurotoxin 1 from Notechis scutatus scutatus (Mainland tiger snake).